A 247-amino-acid polypeptide reads, in one-letter code: Uridylate kinase (247 aa).

15–18 (KLSG) contacts ATP. The involved in allosteric activation by GTP stretch occupies residues 23–28 (GDEGFG). A UMP-binding site is contributed by Gly57. Positions 58 and 62 each coordinate ATP. UMP-binding positions include Asp77 and 138–145 (TGNPFFTT). The ATP site is built by Thr165, Tyr171, and Asp174.

Belongs to the UMP kinase family. As to quaternary structure, homohexamer.

The protein resides in the cytoplasm. It carries out the reaction UMP + ATP = UDP + ADP. Its pathway is pyrimidine metabolism; CTP biosynthesis via de novo pathway; UDP from UMP (UMPK route): step 1/1. Allosterically activated by GTP. Inhibited by UTP. In terms of biological role, catalyzes the reversible phosphorylation of UMP to UDP. This Saccharophagus degradans (strain 2-40 / ATCC 43961 / DSM 17024) protein is Uridylate kinase.